Here is a 318-residue protein sequence, read N- to C-terminus: Ubiquinol oxidase, mitochondrial (318 aa).

The transit peptide at 1–46 (MTVMRGLLNGGRYGNRYIWTAISLRHPEVMEGNGLESAVMQWRRML) directs the protein to the mitochondrion. A helical membrane pass occupies residues 143-163 (AMMLETVAAVPGMVGGMLLHL). Fe cation is bound by residues E147, E186, and H189. The helical transmembrane segment at 205-225 (LLVLAVQGVFFNSFFVLYVLS) threads the bilayer. Fe cation contacts are provided by E237, E288, and H291.

Belongs to the alternative oxidase family. In terms of assembly, homodimer; disulfide-linked. Requires Fe cation as cofactor.

It is found in the mitochondrion inner membrane. The enzyme catalyses 2 a ubiquinol + O2 = 2 a ubiquinone + 2 H2O. Catalyzes the cyanide-resistant oxidation of ubiquinol and the reduction of molecular oxygen to water, but does not translocate protons and consequently is not linked to oxidative phosphorylation. May increase respiration when the cytochrome respiratory pathway is restricted, or in response to low temperatures. The protein is Ubiquinol oxidase, mitochondrial (AOMI 1) of Mangifera indica (Mango).